The following is a 535-amino-acid chain: Pyrichalasin C-18 hydroxylase (535 aa).

The helical transmembrane segment at 42-62 (LPSGTLIVLAALSLALLVAVL) threads the bilayer. N-linked (GlcNAc...) asparagine glycans are attached at residues Asn-139 and Asn-222. Cys-479 is a heme binding site.

Belongs to the cytochrome P450 family. The cofactor is heme.

It localises to the membrane. It functions in the pathway mycotoxin biosynthesis. Functionally, cytochrome P450 monooxygenase; part of the gene cluster that mediates the biosynthesis of the mycotoxin pyrichalasin H, a tyrosine-derived cytochalasan that inhibits the growth of rice seedlings, but also inhibits lymphocyte capping and actin polymerization and alters cell morphology. Pyrichalasin H is indicated as the responsible agent for the genus-specific pathogenicity of M.grisea toward crabgrass. The first step in the pathway is catalyzed by the O-methyltransferase pyiA which methylates free tyrosine to generate the precursor O-methyltyrosine. The hybrid PKS-NRPS pyiS, assisted by the enoyl reductase pyiC, are responsible for fusion of the O-methyltyrosine precursor and the polyketide backbone. The polyketide synthase module (PKS) of pyiS is responsible for the synthesis of the polyketide backbone and the downstream nonribosomal peptide synthetase (NRPS) amidates the carboxyl end of the polyketide with the O-methyltyrosine precursor. As the NRPS A-domain demonstrates substrate tolerance, pyiS can also use phenylalanine, tyrosine and even para-chlorophenylalanine as amino acid precursor, which leads to the production of novel cytochalasans, including halogenated cytochalasans. Because pyiS lacks a designated enoylreductase (ER) domain, the required activity is provided the enoyl reductase pyiC. Reduction by the hydrolyase pyiE leads to 1,5-dihydropyrrolone, which is substrate for dehydration and intra-molecular Diels-Alder cyclization by the Diels-Alderase pyiF to yield the required isoindolone-fused macrocycle. The tailoring cytochrome P450 monooxygenases piyD and piyG catalyze the hydroxylation at C-18 and C-7, respectivily, whereas the short-chain dehydrogenase/reductase pyiH reduces the carbonyl at C-21 in preparation for the transfer of an acetyl group by the acetyltransferase pyiB. These 3 reactions whose order is not clear yet, lead to the production of O-methylpyrichalasin J, a deacetylated pyrichalasin H. Finally, pyiB to converts O-methylpyrichalasin J into the final product pyrichalasin H via acetylation of C-21. The polypeptide is Pyrichalasin C-18 hydroxylase (Pyricularia grisea (Crabgrass-specific blast fungus)).